The following is a 254-amino-acid chain: Ribosomal RNA small subunit methyltransferase G (254 aa).

The segment at Asn-84 to Phe-109 is insert. S-adenosyl-L-methionine contacts are provided by residues Gly-115, Phe-120, Ala-171 to Glu-172, and Arg-185.

This sequence belongs to the methyltransferase superfamily. RNA methyltransferase RsmG family.

It is found in the cytoplasm. In terms of biological role, specifically methylates the N7 position of a guanine in 16S rRNA. This Treponema denticola (strain ATCC 35405 / DSM 14222 / CIP 103919 / JCM 8153 / KCTC 15104) protein is Ribosomal RNA small subunit methyltransferase G.